Here is a 255-residue protein sequence, read N- to C-terminus: Type III pantothenate kinase (255 aa).

6–13 (DVGNTNIV) provides a ligand contact to ATP. Residues Tyr100 and 107–110 (GADR) each bind substrate. Asp109 (proton acceptor) is an active-site residue. Position 129 (Asp129) interacts with K(+). Thr132 contributes to the ATP binding site. Thr184 contacts substrate.

Belongs to the type III pantothenate kinase family. Homodimer. NH4(+) serves as cofactor. Requires K(+) as cofactor.

It is found in the cytoplasm. The catalysed reaction is (R)-pantothenate + ATP = (R)-4'-phosphopantothenate + ADP + H(+). Its pathway is cofactor biosynthesis; coenzyme A biosynthesis; CoA from (R)-pantothenate: step 1/5. In terms of biological role, catalyzes the phosphorylation of pantothenate (Pan), the first step in CoA biosynthesis. The protein is Type III pantothenate kinase of Thermoanaerobacter sp. (strain X514).